Reading from the N-terminus, the 83-residue chain is Putative defensin-like protein 66 (83 aa).

The N-terminal stretch at 1-22 (MGSSRLMITFIVVAMLAISSDL) is a signal peptide. 4 cysteine pairs are disulfide-bonded: Cys38-Cys82, Cys42-Cys65, Cys51-Cys80, and Cys55-Cys81.

The protein belongs to the DEFL family.

It is found in the secreted. The polypeptide is Putative defensin-like protein 66 (Arabidopsis thaliana (Mouse-ear cress)).